A 551-amino-acid chain; its full sequence is Glucan 1,4-alpha-maltotetraohydrolase (551 aa).

Residues 1–21 (MSHILRAAVLAAVLLPFPALA) form the signal peptide. Ca(2+)-binding residues include Asp-22, Gln-23, His-34, Asp-37, and Glu-38. A substrate-binding site is contributed by 99–100 (YF). Ca(2+) is bound at residue Asn-137. Residue His-138 participates in substrate binding. The cysteines at positions 161 and 171 are disulfide-linked. Ca(2+) is bound by residues Asp-172 and Asp-175. 177–181 (FIGGE) lines the substrate pocket. Asp-183 contacts Ca(2+). Arg-212 contacts substrate. Residue Asp-214 is the Nucleophile of the active site. Residue Gly-218 participates in Ca(2+) binding. An intrachain disulfide couples Cys-237 to Cys-272. Glu-240 (proton donor) is an active-site residue. Substrate-binding residues include His-314 and Gln-326. One can recognise a CBM20 domain in the interval 449–551 (GGEGGLVNVN…AAGASTSGSF (103 aa)).

It belongs to the glycosyl hydrolase 13 family. Monomer. Ca(2+) is required as a cofactor.

The protein localises to the secreted. The catalysed reaction is Hydrolysis of (1-&gt;4)-alpha-D-glucosidic linkages in amylaceous polysaccharides, to remove successive maltotetraose residues from the non-reducing chain ends.. Its pathway is glycan degradation; starch degradation. In Roseateles saccharophilus (Pseudomonas saccharophila), this protein is Glucan 1,4-alpha-maltotetraohydrolase (mta).